The chain runs to 172 residues: NADH-ubiquinone oxidoreductase chain 6 (172 aa).

5 helical membrane-spanning segments follow: residues 1-21, 25-45, 53-73, 86-106, and 140-160; these read MTYFMFLLLMALVVGLVAVAS, PYFAALGLVVAAGVGCGVLVG, LVLFLIYLGGMLVVFAYAALA, VLGYVLVYLLGVGLVAGIFWG, and GGMLVICAWVLLLTLLVVLEL.

This sequence belongs to the complex I subunit 6 family.

It is found in the mitochondrion membrane. It catalyses the reaction a ubiquinone + NADH + 5 H(+)(in) = a ubiquinol + NAD(+) + 4 H(+)(out). Core subunit of the mitochondrial membrane respiratory chain NADH dehydrogenase (Complex I) that is believed to belong to the minimal assembly required for catalysis. Complex I functions in the transfer of electrons from NADH to the respiratory chain. The immediate electron acceptor for the enzyme is believed to be ubiquinone. In Cyprinus carpio (Common carp), this protein is NADH-ubiquinone oxidoreductase chain 6 (MT-ND6).